Reading from the N-terminus, the 101-residue chain is Phosphoribosyl-AMP cyclohydrolase (101 aa).

Residue aspartate 71 participates in Mg(2+) binding. A Zn(2+)-binding site is contributed by cysteine 72. 2 residues coordinate Mg(2+): aspartate 73 and aspartate 75. Residues cysteine 88 and cysteine 95 each coordinate Zn(2+).

The protein belongs to the PRA-CH family. As to quaternary structure, homodimer. Mg(2+) serves as cofactor. It depends on Zn(2+) as a cofactor.

The protein localises to the cytoplasm. The catalysed reaction is 1-(5-phospho-beta-D-ribosyl)-5'-AMP + H2O = 1-(5-phospho-beta-D-ribosyl)-5-[(5-phospho-beta-D-ribosylamino)methylideneamino]imidazole-4-carboxamide. The protein operates within amino-acid biosynthesis; L-histidine biosynthesis; L-histidine from 5-phospho-alpha-D-ribose 1-diphosphate: step 3/9. In terms of biological role, catalyzes the hydrolysis of the adenine ring of phosphoribosyl-AMP. The sequence is that of Phosphoribosyl-AMP cyclohydrolase from Bacillus cereus (strain Q1).